The primary structure comprises 72 residues: DNA-directed RNA polymerase subunit omega (72 aa).

It belongs to the RNA polymerase subunit omega family. As to quaternary structure, the RNAP catalytic core consists of 2 alpha, 1 beta, 1 beta' and 1 omega subunit. When a sigma factor is associated with the core the holoenzyme is formed, which can initiate transcription.

The catalysed reaction is RNA(n) + a ribonucleoside 5'-triphosphate = RNA(n+1) + diphosphate. In terms of biological role, promotes RNA polymerase assembly. Latches the N- and C-terminal regions of the beta' subunit thereby facilitating its interaction with the beta and alpha subunits. This Clostridium botulinum (strain Loch Maree / Type A3) protein is DNA-directed RNA polymerase subunit omega.